A 117-amino-acid polypeptide reads, in one-letter code: Resistin-like gamma (117 aa).

Positions Met1–Thr29 are cleaved as a signal peptide. 5 cysteine pairs are disulfide-bonded: Cys61–Cys114, Cys73–Cys113, Cys82–Cys99, Cys84–Cys101, and Cys88–Cys103.

This sequence belongs to the resistin/FIZZ family. Homodimer. Heterodimer with RETNLB. In terms of tissue distribution, expressed in colon, lung, spleen, pancreas, ileum and bone marrow (at protein level). In colon, found throughout the crypt and surface epithelium, including goblet cells (at protein level). Highest expression is observed in bone marrow, spleen and lung, with lower levels in other tissues. Detected at low levels in granulocytes, but not found in monocytes or lymphocytes. Has very weak expression in white adipose tissue.

Its subcellular location is the secreted. Its function is as follows. Probable hormone. Promotes chemotaxis in myeloid cells. This is Resistin-like gamma from Mus musculus (Mouse).